The following is a 145-amino-acid chain: D-aminoacyl-tRNA deacylase (145 aa).

A Gly-cisPro motif, important for rejection of L-amino acids motif is present at residues 137–138 (GP).

It belongs to the DTD family. As to quaternary structure, homodimer.

Its subcellular location is the cytoplasm. The catalysed reaction is glycyl-tRNA(Ala) + H2O = tRNA(Ala) + glycine + H(+). The enzyme catalyses a D-aminoacyl-tRNA + H2O = a tRNA + a D-alpha-amino acid + H(+). In terms of biological role, an aminoacyl-tRNA editing enzyme that deacylates mischarged D-aminoacyl-tRNAs. Also deacylates mischarged glycyl-tRNA(Ala), protecting cells against glycine mischarging by AlaRS. Acts via tRNA-based rather than protein-based catalysis; rejects L-amino acids rather than detecting D-amino acids in the active site. By recycling D-aminoacyl-tRNA to D-amino acids and free tRNA molecules, this enzyme counteracts the toxicity associated with the formation of D-aminoacyl-tRNA entities in vivo and helps enforce protein L-homochirality. The protein is D-aminoacyl-tRNA deacylase of Shewanella baltica (strain OS155 / ATCC BAA-1091).